The primary structure comprises 247 residues: Ribonuclease PH (247 aa).

Phosphate is bound by residues arginine 90 and 128 to 130; that span reads GTR.

It belongs to the RNase PH family. In terms of assembly, homohexameric ring arranged as a trimer of dimers.

It carries out the reaction tRNA(n+1) + phosphate = tRNA(n) + a ribonucleoside 5'-diphosphate. Functionally, phosphorolytic 3'-5' exoribonuclease that plays an important role in tRNA 3'-end maturation. Removes nucleotide residues following the 3'-CCA terminus of tRNAs; can also add nucleotides to the ends of RNA molecules by using nucleoside diphosphates as substrates, but this may not be physiologically important. Probably plays a role in initiation of 16S rRNA degradation (leading to ribosome degradation) during starvation. The protein is Ribonuclease PH of Synechococcus sp. (strain CC9605).